A 574-amino-acid polypeptide reads, in one-letter code: MSHQPLSCLTEKGDSPTETTGNGPPTLAHPNLDTFTPHELLQQMRELLIENHQLKEAMKLNNQAMKGRFEELSAWTEKQKEERLFFETQSKEAKERLTALSLENEKLKQELGKLKGKTERSFEDLTGDPRVPKAEAEQEVEQLKTQVARLQAEKADLLGIVSELQLKLNSGGPSEDSFVEIRMAEGEADAAMKEIKTSPGPIRTDSIDTSKSAEGTRNYLEFEELTVSQLLLCLREGNQKVERLEIALKEAKERILDFEKKAKDRSETETQTEEHKEQEKEEEKSPETVGSEVEMLNLQVTTLFKELQEAHTKLSEAELMKKRLQEKCQALERKNSATPSELNEKQELLYNNKKLELQVESMRSEIKMEQAKTEEEKSKLTTLQLTHNRLLQEYNNALKTIEELKRRESEKVDKVVLQELNGKLEMAEKALASKQLQMDEMKQTIAKQEKDLETMAVLRAQMEVYCSDFHAERAAREKIHEEKEQLALQLAVLLKDDNAFEEGASRQSLMEMQSRHGARASDADQQAFLVQRGAEDRNWLQQQQQNIPIHSCPKCGEVLPDIDTLLIHVTDCII.

The segment at 1 to 33 (MSHQPLSCLTEKGDSPTETTGNGPPTLAHPNLD) is disordered. Residues 38-170 (HELLQQMREL…VSELQLKLNS (133 aa)) adopt a coiled-coil conformation. Positions 58 to 209 (MKLNNQAMKG…GPIRTDSIDT (152 aa)) are interaction with Rab8. The short motif at 176-181 (DSFVEI) is the LIR element. Residue S177 is modified to Phosphoserine; by TBK1. S198 is subject to Phosphoserine. Residues 233–496 (CLREGNQKVE…ALQLAVLLKD (264 aa)) are a coiled coil. Positions 262–286 (AKDRSETETQTEEHKEQEKEEEKSP) are enriched in basic and acidic residues. The interval 262-292 (AKDRSETETQTEEHKEQEKEEEKSPETVGSE) is disordered. The residue at position 336 (S336) is a Phosphoserine. The tract at residues 405-574 (KRRESEKVDK…LLIHVTDCII (170 aa)) is interaction with HD. Residues 406-515 (RRESEKVDKV…RQSLMEMQSR (110 aa)) are interaction with MYO6. The short motif at 468 to 473 (DFHAER) is the UBAN element. A Phosphoserine modification is found at S521. The segment at 544–574 (QQNIPIHSCPKCGEVLPDIDTLLIHVTDCII) adopts a CCHC NOA-type zinc-finger fold. C552, C555, H568, and C572 together coordinate Zn(2+).

As to quaternary structure, self-associates. Interacts with HD. Interacts with GTF3A. Interacts with MYO6. Interacts (via UBAN) with ubiquitinated TFRC. Interacts with GTP-bound Rab8 (RAB8A and/or RAB8B). Interacts with TBC1D17. Interacts with TBK1. Interacts with TRAF3. Binds to linear ubiquitin chains. Interacts with LC3 family members MAP1LC3A, MAP1LC3B, GABARAP, GABARAPL1 and GABARAPL2; OPTN phosphorylation increases the association (at least with MAP1LC3B). Interacts with RAB12; the interaction may be indirect. Interacts with TBK1; this interaction leads to the Golgi localization of TBK1 and its subsequent activation. Interacts with palmitoyltransferase ZDHHC17/HIP14; the interaction does not lead to palmitoylation of OPTN. Interacts with CYLD. Interacts with TOM1; the interaction is indirect and is mediated by MYO6, which acts as a bridge between TOM1 and OPTN. Interacts with USP12; the interaction is independent of USP12 deubiquitinase activity and may be involved in regulation of autophagic flux. In terms of processing, phosphorylated by TBK1, leading to restrict bacterial proliferation in case of infection. Present in aqueous humor of the eye (at protein level). Expressed in trabecular meshwork and astrocytes.

It localises to the cytoplasm. The protein localises to the perinuclear region. It is found in the golgi apparatus. Its subcellular location is the trans-Golgi network. The protein resides in the cytoplasmic vesicle. It localises to the autophagosome. The protein localises to the recycling endosome. Functionally, plays an important role in the maintenance of the Golgi complex, in membrane trafficking, in exocytosis, through its interaction with myosin VI and Rab8. Links myosin VI to the Golgi complex and plays an important role in Golgi ribbon formation. Negatively regulates the induction of IFNB in response to RNA virus infection. Plays a neuroprotective role in the eye and optic nerve. Probably part of the TNF-alpha signaling pathway that can shift the equilibrium toward induction of cell death. May act by regulating membrane trafficking and cellular morphogenesis via a complex that contains Rab8 and huntingtin (HD). Mediates the interaction of Rab8 with the probable GTPase-activating protein TBC1D17 during Rab8-mediated endocytic trafficking, such as that of transferrin receptor (TFRC/TfR); regulates Rab8 recruitment to tubules emanating from the endocytic recycling compartment. Autophagy receptor that interacts directly with both the cargo to become degraded and an autophagy modifier of the MAP1 LC3 family; targets ubiquitin-coated bacteria (xenophagy) and appears to function in the same pathway as SQSTM1 and CALCOCO2/NDP52. This chain is Optineurin (OPTN), found in Sus scrofa (Pig).